Reading from the N-terminus, the 580-residue chain is Tyrosyl-DNA phosphodiesterase 1 (580 aa).

The disordered stretch occupies residues 65–117; it reads ATNKEQEAHSSSSKPAVTAPVASGSSSSGSLDTNPSGSSASGPAASQDTSNLA. Residues 87 to 110 show a composition bias toward low complexity; sequence SGSSSSGSLDTNPSGSSASGPAAS. His248 functions as the Nucleophile in the catalytic mechanism. Lys250 is a binding site for substrate. An interaction with DNA region spans residues 387-390; sequence SIGS. His479 (proton donor/acceptor) is an active-site residue. Lys481 contributes to the substrate binding site.

The protein belongs to the tyrosyl-DNA phosphodiesterase family. As to expression, expressed in the body and at higher levels in the head. Expressed in the delaminating neuroblasts and a few ganglion mother cells in stage 11-14 embryonic central nervous system. Weak expression is seen in gonads at stage 16. Expressed in the brain; expression is regulated by DIP2.

It localises to the nucleus. Its subcellular location is the cytoplasm. In terms of biological role, DNA repair enzyme that can remove a variety of covalent adducts from DNA through hydrolysis of a 3'-phosphodiester bond, giving rise to DNA with a free 3' phosphate. Catalyzes the hydrolysis of dead-end complexes between DNA and the topoisomerase I active site tyrosine residue. Hydrolyzes 3'-phosphoglycolates on protruding 3' ends on DNA double-strand breaks due to DNA damage by radiation and free radicals. Acts on blunt-ended double-strand DNA breaks and on single-stranded DNA. May have low 3'exonuclease activity and may be able to remove a single nucleoside from the 3'end of DNA and RNA molecules with 3'hydroxyl groups. Has no exonuclease activity towards DNA or RNA with a 3'phosphate. Required for normal polarization of epidermal cells, correct subcellular location of the Crb complex to the apical lateral membrane, and for normal neuronal development during embryonic development. Contributes to maintenance of epithelial cells in response to topoisomerase-1-mediated and oxidative DNA damage. Required for precise axonal bifurcation in mushroom body neurons. Required for maintenance of normal neuronal function. In Drosophila melanogaster (Fruit fly), this protein is Tyrosyl-DNA phosphodiesterase 1.